The primary structure comprises 722 residues: Glycine--tRNA ligase beta subunit (722 aa).

Belongs to the class-II aminoacyl-tRNA synthetase family. As to quaternary structure, tetramer of two alpha and two beta subunits.

The protein localises to the cytoplasm. It carries out the reaction tRNA(Gly) + glycine + ATP = glycyl-tRNA(Gly) + AMP + diphosphate. In Xylella fastidiosa (strain 9a5c), this protein is Glycine--tRNA ligase beta subunit (glyS).